We begin with the raw amino-acid sequence, 388 residues long: Chorismate synthase (388 aa).

NADP(+)-binding residues include Arg-39 and Arg-45. Residues 130 to 132, 251 to 252, Ala-296, 311 to 315, and Arg-337 each bind FMN; these read RSS, NA, and KPIPT.

This sequence belongs to the chorismate synthase family. Homotetramer. Requires FMNH2 as cofactor.

It carries out the reaction 5-O-(1-carboxyvinyl)-3-phosphoshikimate = chorismate + phosphate. It functions in the pathway metabolic intermediate biosynthesis; chorismate biosynthesis; chorismate from D-erythrose 4-phosphate and phosphoenolpyruvate: step 7/7. In terms of biological role, catalyzes the anti-1,4-elimination of the C-3 phosphate and the C-6 proR hydrogen from 5-enolpyruvylshikimate-3-phosphate (EPSP) to yield chorismate, which is the branch point compound that serves as the starting substrate for the three terminal pathways of aromatic amino acid biosynthesis. This reaction introduces a second double bond into the aromatic ring system. This chain is Chorismate synthase, found in Streptococcus equi subsp. equi (strain 4047).